The sequence spans 882 residues: Translation initiation factor IF-2 (882 aa).

Residues 28-294 (GIRKSADDSV…SSLQQGFQKP (267 aa)) are disordered. A compositionally biased stretch (polar residues) spans 67–81 (STLNIPGTGGKSKSV). The segment covering 92-209 (VKRDPQEAER…RMAEENKWTD (118 aa)) has biased composition (basic and acidic residues). The span at 244–258 (GRGRNAKAARPKKGN) shows a compositional bias: basic residues. Positions 259-272 (KHAESKADREEARA) are enriched in basic and acidic residues. In terms of domain architecture, tr-type G spans 381–550 (PRAPVVTIMG…LLQAEVLELK (170 aa)). Residues 390–397 (GHVDHGKT) are G1. 390–397 (GHVDHGKT) is a GTP binding site. Residues 415-419 (GITQH) form a G2 region. Residues 436–439 (DTPG) are G3. GTP contacts are provided by residues 436–440 (DTPGH) and 490–493 (NKID). Positions 490-493 (NKID) are G4. Positions 526-528 (SAK) are G5. Lys800 is subject to N6-acetyllysine.

It belongs to the TRAFAC class translation factor GTPase superfamily. Classic translation factor GTPase family. IF-2 subfamily.

It localises to the cytoplasm. Functionally, one of the essential components for the initiation of protein synthesis. Protects formylmethionyl-tRNA from spontaneous hydrolysis and promotes its binding to the 30S ribosomal subunits. Also involved in the hydrolysis of GTP during the formation of the 70S ribosomal complex. The protein is Translation initiation factor IF-2 of Shigella flexneri serotype 5b (strain 8401).